Reading from the N-terminus, the 228-residue chain is METQRASLCLGRWSLWLLLLALVVPSASAQALSYREAVLRAVDRLNEQSSEANLYRLLELDQPPKADEDPGTPKPVSFTVKETVCPRPTRRPPELCDFKENGRVKQCVGTVTLDQIKDPLDITCNEGVRRFPWWWPFLRRPRLRRQAFPPPNVPGPRFPPPNVPGPRFPPPNFPGPRFPPPNFPGPRFPPPNFPGPPFPPPIFPGPWFPPPPPFRPPPFGPPRFPGRR.

The N-terminal stretch at methionine 1–alanine 29 is a signal peptide. Residues glutamine 30–glutamine 146 constitute a propeptide that is removed on maturation. Intrachain disulfides connect cysteine 85/cysteine 96 and cysteine 107/cysteine 124. Repeat copies occupy residues phenylalanine 148–arginine 157, phenylalanine 158–arginine 167, phenylalanine 168–arginine 177, phenylalanine 178–arginine 187, phenylalanine 188–proline 197, phenylalanine 198–tryptophan 207, and phenylalanine 208–proline 217. The interval phenylalanine 148–proline 217 is 7 X 10 AA tandem repeats. Disordered regions lie at residues arginine 167 to glycine 195 and tryptophan 207 to arginine 228. Proline 225 is subject to Proline amide. The propeptide at glycine 226–arginine 228 is removed in mature form.

The protein belongs to the cathelicidin family.

It localises to the secreted. Its function is as follows. Exerts antimicrobial activity. It is more effective against Gram-negative bacteria than Gram-positive bacteria. In Sus scrofa (Pig), this protein is Prophenin-2.